A 388-amino-acid polypeptide reads, in one-letter code: Succinate--CoA ligase [ADP-forming] subunit beta (388 aa).

The ATP-grasp domain occupies Lys-9–Lys-236. ATP contacts are provided by residues Lys-45, Gly-52–Gly-54, Glu-91, Ser-94, and Glu-99. Positions 191 and 205 each coordinate Mg(2+). Substrate is bound by residues Asn-256 and Gly-318–Thr-320.

This sequence belongs to the succinate/malate CoA ligase beta subunit family. As to quaternary structure, heterotetramer of two alpha and two beta subunits. It depends on Mg(2+) as a cofactor.

The catalysed reaction is succinate + ATP + CoA = succinyl-CoA + ADP + phosphate. It carries out the reaction GTP + succinate + CoA = succinyl-CoA + GDP + phosphate. The protein operates within carbohydrate metabolism; tricarboxylic acid cycle; succinate from succinyl-CoA (ligase route): step 1/1. Succinyl-CoA synthetase functions in the citric acid cycle (TCA), coupling the hydrolysis of succinyl-CoA to the synthesis of either ATP or GTP and thus represents the only step of substrate-level phosphorylation in the TCA. The beta subunit provides nucleotide specificity of the enzyme and binds the substrate succinate, while the binding sites for coenzyme A and phosphate are found in the alpha subunit. This is Succinate--CoA ligase [ADP-forming] subunit beta from Parafrankia sp. (strain EAN1pec).